We begin with the raw amino-acid sequence, 291 residues long: MKRIVLFLLTNFAVILVLSISARLLGVDRFLTSNGLNMGMLLAFAALIGFGGSFISLMMSKTMAKWSTGARVIERPGNQDEAWLMDTVRQLSKKAGFPMPEVAVFDGAPNAFATGPSKSKSLVAVSTGLLQSMNRKEVEAVLAHEVAHIQNGDMVTLTLIQGVVNTFVIFLARALAYVVDNFLRGDEKESSGPGIGYWVSSIAFEIMFGILASIVVMFFSRKREYRADAGAAALMGERRSMIDALRVLGGLEAGALPKEMAASGIAGGGMMALFSSHPPIEARIAALESAR.

The next 2 membrane-spanning stretches (helical) occupy residues 4–24 (IVLFLLTNFAVILVLSISARL) and 38–58 (MGMLLAFAALIGFGGSFISLM). Zn(2+) is bound at residue histidine 144. Glutamate 145 is a catalytic residue. Position 148 (histidine 148) interacts with Zn(2+). 2 consecutive transmembrane segments (helical) span residues 152–172 (GDMVTLTLIQGVVNTFVIFLA) and 199–219 (VSSIAFEIMFGILASIVVMFF). Zn(2+) is bound at residue glutamate 224.

This sequence belongs to the peptidase M48B family. The cofactor is Zn(2+).

The protein localises to the cell inner membrane. This chain is Protease HtpX homolog, found in Prosthecochloris aestuarii (strain DSM 271 / SK 413).